The sequence spans 150 residues: UPF0756 membrane protein HD_1071 (150 aa).

The next 4 membrane-spanning stretches (helical) occupy residues 1 to 21 (MSLQ…LGVL), 52 to 72 (YGLT…IVSG), 82 to 102 (ILSW…WLGG), and 114 to 134 (IITG…GIPV).

Belongs to the UPF0756 family.

It localises to the cell membrane. The protein is UPF0756 membrane protein HD_1071 of Haemophilus ducreyi (strain 35000HP / ATCC 700724).